A 320-amino-acid chain; its full sequence is o-succinylbenzoate synthase (320 aa).

Lys-133 serves as the catalytic Proton donor. The Mg(2+) site is built by Asp-161, Glu-190, and Asp-213. Residue Lys-235 is the Proton acceptor of the active site.

This sequence belongs to the mandelate racemase/muconate lactonizing enzyme family. MenC type 1 subfamily. A divalent metal cation is required as a cofactor.

It carries out the reaction (1R,6R)-6-hydroxy-2-succinyl-cyclohexa-2,4-diene-1-carboxylate = 2-succinylbenzoate + H2O. It functions in the pathway quinol/quinone metabolism; 1,4-dihydroxy-2-naphthoate biosynthesis; 1,4-dihydroxy-2-naphthoate from chorismate: step 4/7. The protein operates within quinol/quinone metabolism; menaquinone biosynthesis. Its function is as follows. Converts 2-succinyl-6-hydroxy-2,4-cyclohexadiene-1-carboxylate (SHCHC) to 2-succinylbenzoate (OSB). The protein is o-succinylbenzoate synthase of Shigella flexneri.